A 291-amino-acid polypeptide reads, in one-letter code: MKIKTPLTVKAFAKINLGLFITRKRDDGYHTLSTLFAPIDWYDILSFSAADAIEMSCTNPDLPVDDSNLCVRAARLLQDEGGVKEGVSMLLDKRVPFGAGLGGGSSDAATVLRVLNSFWDINLSSVDLHRFAVSLGADVPYFLEMQGLAYAGGIGDELVDLNMTIPWFIVTVFPCEHISTAWAYGHFHRRFELERPDLRALAPQLSSDGKTELLPLFENDFESAVFEQFGNVRQVKTDLLSAGALFSSLSGSGSAVYGLFEGESAAREVMAAMEAKCYPVSLTPPGFSMRQ.

The active site involves K14. ATP is bound at residue 96–106; that stretch reads PFGAGLGGGSS. D138 is a catalytic residue.

This sequence belongs to the GHMP kinase family. IspE subfamily.

The catalysed reaction is 4-CDP-2-C-methyl-D-erythritol + ATP = 4-CDP-2-C-methyl-D-erythritol 2-phosphate + ADP + H(+). It participates in isoprenoid biosynthesis; isopentenyl diphosphate biosynthesis via DXP pathway; isopentenyl diphosphate from 1-deoxy-D-xylulose 5-phosphate: step 3/6. Its function is as follows. Catalyzes the phosphorylation of the position 2 hydroxy group of 4-diphosphocytidyl-2C-methyl-D-erythritol. This chain is 4-diphosphocytidyl-2-C-methyl-D-erythritol kinase, found in Chlorobium phaeovibrioides (strain DSM 265 / 1930) (Prosthecochloris vibrioformis (strain DSM 265)).